Consider the following 89-residue polypeptide: Large ribosomal subunit protein bL27 (89 aa).

A disordered region spans residues 1-21 (MAHKKAGGSSRNGRDSKGKRL).

The protein belongs to the bacterial ribosomal protein bL27 family.

The sequence is that of Large ribosomal subunit protein bL27 from Bradyrhizobium sp. (strain BTAi1 / ATCC BAA-1182).